A 426-amino-acid chain; its full sequence is D-tagatose-1,6-bisphosphate aldolase subunit KbaZ (426 aa).

The protein belongs to the GatZ/KbaZ family. KbaZ subfamily. In terms of assembly, forms a complex with KbaY.

It participates in carbohydrate metabolism; D-tagatose 6-phosphate degradation; D-glyceraldehyde 3-phosphate and glycerone phosphate from D-tagatose 6-phosphate: step 2/2. Functionally, component of the tagatose-1,6-bisphosphate aldolase KbaYZ that is required for full activity and stability of the Y subunit. Could have a chaperone-like function for the proper and stable folding of KbaY. When expressed alone, KbaZ does not show any aldolase activity. The polypeptide is D-tagatose-1,6-bisphosphate aldolase subunit KbaZ (Escherichia coli O8 (strain IAI1)).